The primary structure comprises 197 residues: Cell division protein SepF (197 aa).

The disordered stretch occupies residues 15 to 89 (EEEEVEGPEE…RMNNNSKNNS (75 aa)). A compositionally biased stretch (basic and acidic residues) spans 22 to 42 (PEERESSRSRERVQEREDYNR). Residues 43 to 73 (NENQATPQTFNNKQQAIKSVPQKNTLRSNTT) are compositionally biased toward polar residues. Low complexity predominate over residues 80–89 (RMNNNSKNNS).

This sequence belongs to the SepF family. In terms of assembly, homodimer. Interacts with FtsZ.

The protein resides in the cytoplasm. Cell division protein that is part of the divisome complex and is recruited early to the Z-ring. Probably stimulates Z-ring formation, perhaps through the cross-linking of FtsZ protofilaments. Its function overlaps with FtsA. The sequence is that of Cell division protein SepF from Staphylococcus epidermidis (strain ATCC 35984 / DSM 28319 / BCRC 17069 / CCUG 31568 / BM 3577 / RP62A).